A 1025-amino-acid polypeptide reads, in one-letter code: Retrovirus-related Pol polyprotein from type-1 retrotransposable element R2 (1025 aa).

Over residues 1 to 11 (NQIKKSNTSTG) the composition is skewed to polar residues. Positions 1 to 38 (NQIKKSNTSTGARIPKAMTNPADNFAGGQWKPPGRRSA) are disordered. The C2H2-type zinc-finger motif lies at 46–69 (FVCEHCLRAFTTNTGRGLHIKRAH). Residues 146–158 (NRARETELTRLET) are compositionally biased toward basic and acidic residues. A disordered region spans residues 146–172 (NRARETELTRLETADEDPASQEQDNPN). The region spanning 358 to 635 (MIMYHGQCPR…DQWKYLGVVY (278 aa)) is the Reverse transcriptase domain. Positions 755–1025 (SLLGGDWVAE…YRTERRRTAN (271 aa)) are nucleic acid-binding endonuclease.

It catalyses the reaction DNA(n) + a 2'-deoxyribonucleoside 5'-triphosphate = DNA(n+1) + diphosphate. The protein is Retrovirus-related Pol polyprotein from type-1 retrotransposable element R2 of Nasonia vitripennis (Parasitic wasp).